The chain runs to 491 residues: Homeobox protein unplugged (491 aa).

Disordered regions lie at residues 1 to 23, 46 to 69, 124 to 146, and 227 to 329; these read MERP…TKTT, SASA…QEQE, AGKE…PLPH, and FSPA…RRTA. The span at 254–264 shows a compositional bias: polar residues; the sequence is GDSSSDISLTL. A compositionally biased stretch (gly residues) spans 305-316; sequence GLGGKDSQGNGS. A DNA-binding region (homeobox) is located at residues 323–382; that stretch reads SRRRRTAFTSEQLLELEREFHAKKYLSLTERSQIATSLKLSEVQVKIWFQNRRAKWKRVK.

Its subcellular location is the nucleus. Its function is as follows. Plays a regulatory role in neural branching of the tracheae: segment-specific aspects of these neural branching patterns appear to be generated by homeotic regulation of expression. In Drosophila pseudoobscura pseudoobscura (Fruit fly), this protein is Homeobox protein unplugged.